The chain runs to 331 residues: Terpene synthase 8 (331 aa).

Positions 97 to 102 (DDFYLE) match the DDxx(x)D/E motif motif. Residues 228–236 (NDIYSFNKE) carry the NDxxSxxxD/E motif motif.

It belongs to the terpene synthase family.

Terpene synthase that converts its substrate farnesyl diphosphate (FPP) into several yet unidentified sesquiterpenes. This is Terpene synthase 8 from Dictyostelium purpureum (Slime mold).